The sequence spans 1387 residues: Kinesin-like protein KIF15 (1387 aa).

Residues 1-23 form a disordered region; sequence MAPGCKSELRNVTNSHSNQPSNE. Residues 10 to 22 show a composition bias toward polar residues; sequence RNVTNSHSNQPSN. Residues 26-363 enclose the Kinesin motor domain; it reads AIKVFVRIRP…LNFAQRAKLI (338 aa). 109 to 116 contacts ATP; the sequence is GQTGSGKT. A coiled-coil region spans residues 368–1132; sequence VVNEDTQGNV…LKMRQLEHVM (765 aa). At Ser-568 the chain carries Phosphoserine. Position 1009 is an N6-acetyllysine (Lys-1009). Residues Ser-1141 and Ser-1169 each carry the phosphoserine modification.

It belongs to the TRAFAC class myosin-kinesin ATPase superfamily. Kinesin family. KLP2 subfamily. As to quaternary structure, interacts with MKI67 and TPX2. Expressed in brain (neurons in the external germinal layer of the cerebellum and in ventricular zones) (at protein level). Expressed in spleen and testis.

The protein resides in the cytoplasm. It localises to the cytoskeleton. Its subcellular location is the spindle. Plus-end directed kinesin-like motor enzyme involved in mitotic spindle assembly. This Mus musculus (Mouse) protein is Kinesin-like protein KIF15 (Kif15).